The primary structure comprises 254 residues: Thiazole synthase (254 aa).

Residue Lys95 is the Schiff-base intermediate with DXP of the active site. 1-deoxy-D-xylulose 5-phosphate is bound by residues Gly156, 182 to 183 (AG), and 204 to 205 (NT).

It belongs to the ThiG family. As to quaternary structure, homotetramer. Forms heterodimers with either ThiH or ThiS.

It localises to the cytoplasm. The enzyme catalyses [ThiS sulfur-carrier protein]-C-terminal-Gly-aminoethanethioate + 2-iminoacetate + 1-deoxy-D-xylulose 5-phosphate = [ThiS sulfur-carrier protein]-C-terminal Gly-Gly + 2-[(2R,5Z)-2-carboxy-4-methylthiazol-5(2H)-ylidene]ethyl phosphate + 2 H2O + H(+). The protein operates within cofactor biosynthesis; thiamine diphosphate biosynthesis. Catalyzes the rearrangement of 1-deoxy-D-xylulose 5-phosphate (DXP) to produce the thiazole phosphate moiety of thiamine. Sulfur is provided by the thiocarboxylate moiety of the carrier protein ThiS. In vitro, sulfur can be provided by H(2)S. The protein is Thiazole synthase of Shewanella putrefaciens (strain CN-32 / ATCC BAA-453).